A 440-amino-acid polypeptide reads, in one-letter code: L-gulonolactone oxidase (440 aa).

The region spanning 17-187 (YGCCPEMYFQ…LTVTLQCVPQ (171 aa)) is the FAD-binding PCMH-type domain. Histidine 54 bears the Pros-8alpha-FAD histidine mark. The helical transmembrane segment at 253 to 273 (FYLLEFLLWISTFLPGLVGWI) threads the bilayer.

The protein belongs to the oxygen-dependent FAD-linked oxidoreductase family. It depends on FAD as a cofactor.

Its subcellular location is the microsome membrane. The protein resides in the endoplasmic reticulum membrane. It carries out the reaction L-gulono-1,4-lactone + O2 = L-ascorbate + H2O2 + H(+). It participates in cofactor biosynthesis; L-ascorbate biosynthesis via UDP-alpha-D-glucuronate pathway; L-ascorbate from UDP-alpha-D-glucuronate: step 4/4. Functionally, oxidizes L-gulono-1,4-lactone to hydrogen peroxide and L-xylo-hexulonolactone which spontaneously isomerizes to L-ascorbate. The protein is L-gulonolactone oxidase (GULO) of Bos taurus (Bovine).